The chain runs to 515 residues: 2-isopropylmalate synthase (515 aa).

The Pyruvate carboxyltransferase domain occupies 5-267 (VIIFDTTLRD…STGIKHEEIH (263 aa)). Residues Asp-14, His-202, His-204, and Asn-238 each contribute to the Mn(2+) site. Residues 392-515 (KLNYLSVQSG…EMKQKKIATV (124 aa)) are regulatory domain.

This sequence belongs to the alpha-IPM synthase/homocitrate synthase family. LeuA type 1 subfamily. In terms of assembly, homodimer. Requires Mn(2+) as cofactor.

The protein localises to the cytoplasm. The catalysed reaction is 3-methyl-2-oxobutanoate + acetyl-CoA + H2O = (2S)-2-isopropylmalate + CoA + H(+). Its pathway is amino-acid biosynthesis; L-leucine biosynthesis; L-leucine from 3-methyl-2-oxobutanoate: step 1/4. Catalyzes the condensation of the acetyl group of acetyl-CoA with 3-methyl-2-oxobutanoate (2-ketoisovalerate) to form 3-carboxy-3-hydroxy-4-methylpentanoate (2-isopropylmalate). The polypeptide is 2-isopropylmalate synthase (Vibrio parahaemolyticus serotype O3:K6 (strain RIMD 2210633)).